The following is a 224-amino-acid chain: UPF0758 protein VIBHAR_00653 (224 aa).

The 123-residue stretch at 102–224 (ALTSPEQTKL…SVSFAERGWI (123 aa)) folds into the MPN domain. Zn(2+) is bound by residues His173, His175, and Asp186. Positions 173 to 186 (HNHPSGVAEPSQAD) match the JAMM motif motif.

This sequence belongs to the UPF0758 family.

The sequence is that of UPF0758 protein VIBHAR_00653 from Vibrio campbellii (strain ATCC BAA-1116).